We begin with the raw amino-acid sequence, 178 residues long: ATP-dependent protease subunit HslV (178 aa).

Residue Thr-7 is part of the active site. Na(+) is bound by residues Gly-162, Cys-165, and Thr-168.

It belongs to the peptidase T1B family. HslV subfamily. As to quaternary structure, a double ring-shaped homohexamer of HslV is capped on each side by a ring-shaped HslU homohexamer. The assembly of the HslU/HslV complex is dependent on binding of ATP.

Its subcellular location is the cytoplasm. The enzyme catalyses ATP-dependent cleavage of peptide bonds with broad specificity.. Allosterically activated by HslU binding. Functionally, protease subunit of a proteasome-like degradation complex believed to be a general protein degrading machinery. In Cupriavidus necator (strain ATCC 17699 / DSM 428 / KCTC 22496 / NCIMB 10442 / H16 / Stanier 337) (Ralstonia eutropha), this protein is ATP-dependent protease subunit HslV.